We begin with the raw amino-acid sequence, 311 residues long: Fluoride export protein 1 (311 aa).

At 1-6 the chain is on the cytoplasmic side; sequence MLLTQS. A helical membrane pass occupies residues 7-25; it reads YFCIMSMLGTLARLGLTAL. Topologically, residues 26–29 are extracellular; sequence NTYP. The helical transmembrane segment at 30 to 50 threads the bilayer; it reads GAPFSGLLWVQFVGCVIMGFC. At 51-65 the chain is on the cytoplasmic side; that stretch reads QTESVFFPRPKHNAT. A helical membrane pass occupies residues 66–86; sequence FLLAITTGFCGSLTTFSSWML. Residues 87 to 106 are Extracellular-facing; the sequence is QMFTGMANLDPFERRGRGYS. Residues 107–127 form a helical membrane-spanning segment; sequence FLSVVSDFMVTMCIAMSSLIW. The Cytoplasmic segment spans residues 128–154; the sequence is GKQIGKTTGQWRIGKVAFAWPIPAHTH. Residues 155–175 traverse the membrane as a helical segment; it reads IVVRVLLLLLSICFFVGAAFY. The Extracellular segment spans residues 176–186; the sequence is TAYTTNVTHRG. Asn-181 is a glycosylation site (N-linked (GlcNAc...) asparagine). A helical membrane pass occupies residues 187–207; that stretch reads IGFSLIFSPFAALTRLYLARF. Residues 208–212 lie on the Cytoplasmic side of the membrane; that stretch reads LNSPQ. A helical transmembrane segment spans residues 213-233; it reads YFIPYGTLCANVFATLLLSIM. The Extracellular segment spans residues 234–250; the sequence is YMIPQITHCTPVSRSVM. A helical membrane pass occupies residues 251 to 268; that stretch reads YGIQNGFCAVLSTLSTFS. The Cytoplasmic segment spans residues 269 to 278; the sequence is NELHTMPIKR. The chain crosses the membrane as a helical span at residues 279–299; it reads AYIYCIISVAISFSICVIVDG. The Extracellular segment spans residues 300–311; sequence ATAWGHGYTEKY.

This sequence belongs to the fluoride channel Fluc/FEX (TC 1.A.43) family.

The protein localises to the cell membrane. It carries out the reaction fluoride(in) = fluoride(out). Fluoride channel required for the rapid expulsion of cytoplasmic fluoride. The sequence is that of Fluoride export protein 1 (fex1) from Schizosaccharomyces pombe (strain 972 / ATCC 24843) (Fission yeast).